The primary structure comprises 76 residues: Waprin-Rha1 (76 aa).

The signal sequence occupies residues M1 to A24. Residues Q25–S75 enclose the WAP domain. Cystine bridges form between C32–C62, C45–C66, C49–C61, and C55–C71.

The protein belongs to the venom waprin family. In terms of tissue distribution, expressed by the venom gland.

Its subcellular location is the secreted. Damages membranes of susceptible bacteria. Has no hemolytic activity. Not toxic to mice. Does not inhibit the proteinases elastase and cathepsin G. This chain is Waprin-Rha1, found in Rhabdophis tigrinus tigrinus (Tiger keelback snake).